Reading from the N-terminus, the 542-residue chain is CTP synthase (542 aa).

An amidoligase domain region spans residues 1 to 265 (MTRYIFVTGG…DDFVVERFGL (265 aa)). Residue Ser-13 participates in CTP binding. Ser-13 serves as a coordination point for UTP. ATP-binding positions include 14–19 (SLGKGI) and Asp-71. Mg(2+)-binding residues include Asp-71 and Glu-139. Residues 146–148 (DIE), 186–191 (KTKPTQ), and Lys-222 contribute to the CTP site. Residues 186–191 (KTKPTQ) and Lys-222 each bind UTP. Positions 290-541 (TIAMVGKYME…VKAALAQKNK (252 aa)) constitute a Glutamine amidotransferase type-1 domain. Gly-351 serves as a coordination point for L-glutamine. The active-site Nucleophile; for glutamine hydrolysis is the Cys-378. Residues 379–382 (LGMQ), Glu-402, and Arg-469 each bind L-glutamine. Catalysis depends on residues His-514 and Glu-516.

It belongs to the CTP synthase family. Homotetramer.

The enzyme catalyses UTP + L-glutamine + ATP + H2O = CTP + L-glutamate + ADP + phosphate + 2 H(+). The catalysed reaction is L-glutamine + H2O = L-glutamate + NH4(+). It catalyses the reaction UTP + NH4(+) + ATP = CTP + ADP + phosphate + 2 H(+). It participates in pyrimidine metabolism; CTP biosynthesis via de novo pathway; CTP from UDP: step 2/2. Its activity is regulated as follows. Allosterically activated by GTP, when glutamine is the substrate; GTP has no effect on the reaction when ammonia is the substrate. The allosteric effector GTP functions by stabilizing the protein conformation that binds the tetrahedral intermediate(s) formed during glutamine hydrolysis. Inhibited by the product CTP, via allosteric rather than competitive inhibition. Its function is as follows. Catalyzes the ATP-dependent amination of UTP to CTP with either L-glutamine or ammonia as the source of nitrogen. Regulates intracellular CTP levels through interactions with the four ribonucleotide triphosphates. The sequence is that of CTP synthase from Pseudomonas putida (strain ATCC 700007 / DSM 6899 / JCM 31910 / BCRC 17059 / LMG 24140 / F1).